The sequence spans 326 residues: tRNA-modifying protein YgfZ (326 aa).

Residues Trp27 and Trp189 each coordinate folate.

It belongs to the tRNA-modifying YgfZ family.

Its subcellular location is the cytoplasm. In terms of biological role, folate-binding protein involved in regulating the level of ATP-DnaA and in the modification of some tRNAs. It is probably a key factor in regulatory networks that act via tRNA modification, such as initiation of chromosomal replication. This chain is tRNA-modifying protein YgfZ, found in Escherichia coli O157:H7 (strain EC4115 / EHEC).